The primary structure comprises 192 residues: Protein hunchback (192 aa).

Disordered regions lie at residues 16–54 and 152–192; these read SHHHHHHHAHHSHHADSNSNASSPHQSPLPSPNPPSNTN and LTPP…KYMA. Basic residues predominate over residues 17 to 28; it reads HHHHHHHAHHSH. The segment covering 32–41 has biased composition (low complexity); sequence SNSNASSPHQ. Residues 173–192 are compositionally biased toward basic and acidic residues; that stretch reads EPEKEHDLMSNSSEDMKYMA.

Belongs to the hunchback C2H2-type zinc-finger protein family.

The protein resides in the nucleus. Functionally, gap class segmentation protein that controls development of head structures. The polypeptide is Protein hunchback (hb) (Drosophila tanythrix (Fruit fly)).